A 508-amino-acid polypeptide reads, in one-letter code: uncharacterized protein (508 aa).

The protein localises to the virion. This is an uncharacterized protein from Acanthamoeba polyphaga mimivirus (APMV).